A 38-amino-acid polypeptide reads, in one-letter code: Large ribosomal subunit protein bL36 (38 aa).

Belongs to the bacterial ribosomal protein bL36 family.

In Psychrobacter cryohalolentis (strain ATCC BAA-1226 / DSM 17306 / VKM B-2378 / K5), this protein is Large ribosomal subunit protein bL36.